Reading from the N-terminus, the 237-residue chain is Protein ULTRAPETALA 1 (237 aa).

One can recognise an SAND domain in the interval 18-116; that stretch reads EELQEMSGVN…SKTVLLKYYN (99 aa). The CW-type zinc-finger motif lies at 133–191; sequence VCHRDEFVGCNDCGKERRFRLRSRDECRLHHNAMGDPNWKCSDFPYDKITCEEEEERGS.

As to quaternary structure, interacts with HHO5. Associates with ATX1 for trimethylating 'Lys-4' on histone H3 (H3K4me3) at flower MADS box gene loci. As to expression, expressed at low levels in seedlings, roots, shoots, leaves, stems, inflorescences, pollen, flowers and siliques, with highest levels dividing tissues including inflorescence.

It localises to the cytoplasm. The protein resides in the nucleus. Functionally, putative transcription factor that acts as a key negative regulator of cell accumulation in shoot and floral meristems. Negatively regulates the size of the WUSCHEL (WUS)-expressing organizing center in inflorescence meristems. May act by down-regulating expression of WUS. Acts as an antirepressor that counteracts EMF1 action through modulation of trimethylated 'Lys-4' on histone H3 (H3K4me3) marks on target gene loci (including genes involved in salt stress response and flower development). Collaboratively with RBL and CYP40/SQN, influences floral meristem (FM) determinacy in an AGAMOUS and SUPERMAN-dependent manner, thus contributing to the floral developmental homeostasis. The chain is Protein ULTRAPETALA 1 from Arabidopsis thaliana (Mouse-ear cress).